A 198-amino-acid chain; its full sequence is Recombination protein RecR (198 aa).

The C4-type zinc-finger motif lies at 58 to 73 (CSVCGNFTDKDPCAIC). In terms of domain architecture, Toprim spans 81 to 175 (SIICVIEQPK…KVTRIAHGVP (95 aa)).

This sequence belongs to the RecR family.

Functionally, may play a role in DNA repair. It seems to be involved in an RecBC-independent recombinational process of DNA repair. It may act with RecF and RecO. In Clostridium botulinum (strain ATCC 19397 / Type A), this protein is Recombination protein RecR.